A 63-amino-acid polypeptide reads, in one-letter code: Large ribosomal subunit protein uL30 (63 aa).

This sequence belongs to the universal ribosomal protein uL30 family. Part of the 50S ribosomal subunit.

The sequence is that of Large ribosomal subunit protein uL30 from Xylella fastidiosa (strain 9a5c).